The following is a 476-amino-acid chain: Protein transport protein Sec61 subunit alpha isoform A (476 aa).

At 2 to 33 (GIKFLEVIKPFCAVLPEIQKPERKIQFREKVL) the chain is on the cytoplasmic side. A helical membrane pass occupies residues 34 to 53 (WTAITLFIFLVCCQIPLFGI). Over 54 to 76 (MSSDSADPFYWMRVILASNRGTL) the chain is Lumenal. The helical transmembrane segment at 77-96 (MELGISPIVTSGLIMQLLAG) threads the bilayer. The Cytoplasmic segment spans residues 97 to 117 (AKIIEVGDTPKDRALFNGAQK). Residues 118–138 (LFGMIITIGQSIVYVMTGMYG) traverse the membrane as a helical segment. At 139–144 (DPSEMG) the chain is on the lumenal side. Residues 145–165 (AGICLLIIIQLFVAGLIVLLL) form a helical membrane-spanning segment. Residues 166–172 (DELLQKG) lie on the Cytoplasmic side of the membrane. Residues 173–193 (YGLGSGISLFIATNICETIVW) traverse the membrane as a helical segment. The Lumenal segment spans residues 194–240 (KAFSPTTVNTGRGTEFEGAIIALFHLLATRTDKVRALREAFYRQNLP). Residues 241–261 (NLLNLIATVFVFAVVIYFQGF) form a helical membrane-spanning segment. Over 262–288 (RVDLPIKSARYRGQYNTYPIKLFYTSN) the chain is Cytoplasmic. The chain crosses the membrane as a helical span at residues 289 to 309 (IPIILQSALVSNLYVISQMLS). Over 310–354 (TRFSGNFLVNLLGTWSDTSTGGPARAYPVGGLCYFLSPPESFGSV) the chain is Lumenal. Residues 355–375 (LDDPIHAAIYIVFMLGSCAFF) traverse the membrane as a helical segment. Residues 376–420 (SKTWIEVSGSSAKDVAKQLKEQQMVMGGHRETSMVHELNRYIPTA) are Cytoplasmic-facing. Residues 421 to 441 (AAFGGLCIGGLSVMADFLGAI) traverse the membrane as a helical segment. Residues 442–445 (GSGT) are Lumenal-facing. A helical membrane pass occupies residues 446–462 (GILLAVTIIYQYFEIFV). Residues 463 to 476 (KEQSEMGSMGALLF) are Cytoplasmic-facing.

Belongs to the SecY/SEC61-alpha family. As to quaternary structure, the SEC61 channel-forming translocon complex consists of channel-forming core components SEC61A1, SEC61B and SEC61G and different auxiliary components such as SEC62 and SEC63. The SEC61 channel associates with the multi-pass translocon (MPT) complex.

It is found in the endoplasmic reticulum membrane. Functionally, component of SEC61 channel-forming translocon complex that mediates transport of signal peptide-containing precursor polypeptides across the endoplasmic reticulum (ER). Forms a ribosome receptor and a gated pore in the ER membrane, both functions required for cotranslational translocation of nascent polypeptides. May cooperate with auxiliary protein SEC62, SEC63 and HSPA5/BiP to enable post-translational transport of small presecretory proteins. The SEC61 channel is also involved in ER membrane insertion of transmembrane proteins: it mediates membrane insertion of the first few transmembrane segments of proteins, while insertion of subsequent transmembrane regions of multi-pass membrane proteins is mediated by the multi-pass translocon (MPT) complex. This Oncorhynchus mykiss (Rainbow trout) protein is Protein transport protein Sec61 subunit alpha isoform A (sec61aa).